We begin with the raw amino-acid sequence, 93 residues long: Large ribosomal subunit protein uL23cz/uL23cy (93 aa).

Belongs to the universal ribosomal protein uL23 family. As to quaternary structure, part of the 50S ribosomal subunit.

The protein localises to the plastid. The protein resides in the chloroplast. Binds to 23S rRNA. In Piper cenocladum (Ant piper), this protein is Large ribosomal subunit protein uL23cz/uL23cy (rpl23-A).